The primary structure comprises 132 residues: ATP synthase epsilon chain, cyanelle (132 aa).

This sequence belongs to the ATPase epsilon chain family. F-type ATPases have 2 components, CF(1) - the catalytic core - and CF(0) - the membrane proton channel. CF(1) has five subunits: alpha(3), beta(3), gamma(1), delta(1), epsilon(1). CF(0) has three main subunits: a, b and c.

The protein localises to the plastid. The protein resides in the cyanelle thylakoid membrane. Its function is as follows. Produces ATP from ADP in the presence of a proton gradient across the membrane. The protein is ATP synthase epsilon chain, cyanelle of Cyanophora paradoxa.